A 408-amino-acid chain; its full sequence is Multidrug resistance protein MdtG (408 aa).

The next 10 helical transmembrane spans lie at 16-36 (LIVA…VMPF), 58-78 (IVFS…GGLA), 92-112 (LGMG…QFLI), 115-135 (ALLG…ATQV), 146-166 (TLST…GLLA), 173-193 (PVFF…LFCI), 224-244 (LFVT…ILTL), 256-276 (VAFI…LSAP), 290-310 (ILIT…YVQT), and 378-398 (AVFL…WNSL).

This sequence belongs to the major facilitator superfamily. DHA1 family. MdtG (TC 2.A.1.2.20) subfamily.

The protein resides in the cell inner membrane. Its function is as follows. Confers resistance to fosfomycin and deoxycholate. This Escherichia coli O17:K52:H18 (strain UMN026 / ExPEC) protein is Multidrug resistance protein MdtG.